The following is a 314-amino-acid chain: tRNA(Ile)-lysidine synthase (314 aa).

Position 37–42 (37–42) interacts with ATP; it reads SGGPDS.

This sequence belongs to the tRNA(Ile)-lysidine synthase family.

It is found in the cytoplasm. It carries out the reaction cytidine(34) in tRNA(Ile2) + L-lysine + ATP = lysidine(34) in tRNA(Ile2) + AMP + diphosphate + H(+). Functionally, ligates lysine onto the cytidine present at position 34 of the AUA codon-specific tRNA(Ile) that contains the anticodon CAU, in an ATP-dependent manner. Cytidine is converted to lysidine, thus changing the amino acid specificity of the tRNA from methionine to isoleucine. This chain is tRNA(Ile)-lysidine synthase, found in Corynebacterium glutamicum (strain ATCC 13032 / DSM 20300 / JCM 1318 / BCRC 11384 / CCUG 27702 / LMG 3730 / NBRC 12168 / NCIMB 10025 / NRRL B-2784 / 534).